The following is a 452-amino-acid chain: Tryptophan biosynthesis protein TrpCF (452 aa).

Residues 1–256 form an indole-3-glycerol phosphate synthase region; that stretch reads MQTVLAKIVA…AAVRRVLLGE (256 aa). Residues 257–452 are N-(5'-phosphoribosyl)anthranilate isomerase; sequence NKVCGLTRAQ…ASVFQTLRAY (196 aa).

In the N-terminal section; belongs to the TrpC family. The protein in the C-terminal section; belongs to the TrpF family. As to quaternary structure, monomer.

It catalyses the reaction N-(5-phospho-beta-D-ribosyl)anthranilate = 1-(2-carboxyphenylamino)-1-deoxy-D-ribulose 5-phosphate. It carries out the reaction 1-(2-carboxyphenylamino)-1-deoxy-D-ribulose 5-phosphate + H(+) = (1S,2R)-1-C-(indol-3-yl)glycerol 3-phosphate + CO2 + H2O. It functions in the pathway amino-acid biosynthesis; L-tryptophan biosynthesis; L-tryptophan from chorismate: step 3/5. Its pathway is amino-acid biosynthesis; L-tryptophan biosynthesis; L-tryptophan from chorismate: step 4/5. Functionally, bifunctional enzyme that catalyzes two sequential steps of tryptophan biosynthetic pathway. The first reaction is catalyzed by the isomerase, coded by the TrpF domain; the second reaction is catalyzed by the synthase, coded by the TrpC domain. This chain is Tryptophan biosynthesis protein TrpCF (trpC), found in Salmonella typhi.